The primary structure comprises 349 residues: Serine/threonine-protein kinase SRK2A (349 aa).

Positions 12 to 268 (YELVKDIGSG…IQEIKNHEWF (257 aa)) constitute a Protein kinase domain. ATP contacts are provided by residues 18–26 (IGSGNFGVA) and K41. The Proton acceptor role is filled by D131. The segment at 151–177 (DFGYSKSSLLHSQPKSTVGTPAYIAPE) is activation loop.

This sequence belongs to the protein kinase superfamily. Ser/Thr protein kinase family.

It catalyses the reaction L-seryl-[protein] + ATP = O-phospho-L-seryl-[protein] + ADP + H(+). The catalysed reaction is L-threonyl-[protein] + ATP = O-phospho-L-threonyl-[protein] + ADP + H(+). With respect to regulation, activated by osmotic stress and by abscisic acid (ABA). Activation by NaCl is dependent on ABA. Its function is as follows. Involved in early responses to osmotic stress. The polypeptide is Serine/threonine-protein kinase SRK2A (Physcomitrium patens (Spreading-leaved earth moss)).